We begin with the raw amino-acid sequence, 310 residues long: D-alanyl-D-alanine endopeptidase (310 aa).

The first 23 residues, 1 to 23 (MRNRLLSLVTLFLSLSVATAVSA), serve as a signal peptide directing secretion. Ser-66 (acyl-ester intermediate) is an active-site residue. Lys-69 (proton acceptor) is an active-site residue. The active site involves Ser-123. Position 230 (Lys-230) interacts with substrate.

Belongs to the peptidase S11 family.

Its subcellular location is the periplasm. Functionally, cell wall formation. This is D-alanyl-D-alanine endopeptidase (pbpG) from Pseudomonas aeruginosa (strain ATCC 15692 / DSM 22644 / CIP 104116 / JCM 14847 / LMG 12228 / 1C / PRS 101 / PAO1).